A 393-amino-acid polypeptide reads, in one-letter code: Metal tolerance protein A2 (393 aa).

The Cytoplasmic segment spans residues 1-72 (MVTPKLHLDL…EAQERAASMR (72 aa)). Residues 73 to 93 (KLLIAVLLCAIFIVVEVVGGI) form a helical membrane-spanning segment. Topologically, residues 94-105 (KANSLAILTDAA) are vacuolar. A helical transmembrane segment spans residues 106–126 (HLLSDVAAFAISLFSLWASGW). Residues 127–138 (KANPQQSYGFFR) lie on the Cytoplasmic side of the membrane. The helical transmembrane segment at 139–159 (IEILGALVSIQMIWLLAGILV) threads the bilayer. At 160 to 176 (YEAIVRLNNGSGEVEGS) the chain is on the vacuolar side. A helical membrane pass occupies residues 177-197 (LMFAVSAVGLLVNIAMAILLG). Positions 198-233 (HDHGHGHGHSHDNGHGHSHDHGHGIAATEHHHDSGH) are required for zinc-binding. Residues 198–257 (HDHGHGHGHSHDNGHGHSHDHGHGIAATEHHHDSGHDESQLSDVLIEQKKQRNVNIQGAY) are Cytoplasmic-facing. Residues 202–236 (HGHGHSHDNGHGHSHDHGHGIAATEHHHDSGHDES) are compositionally biased toward basic and acidic residues. Residues 202–237 (HGHGHSHDNGHGHSHDHGHGIAATEHHHDSGHDESQ) are disordered. Residues 258-278 (LHVLGDSIQSVGVMIGGAIIW) traverse the membrane as a helical segment. At 279–284 (YKPEWK) the chain is on the vacuolar side. Residues 285 to 305 (ILDLICTLVFSVIVLGTTIGM) traverse the membrane as a helical segment. Residues 306 to 393 (LRNILEVLME…SHVTIQIERQ (88 aa)) are Cytoplasmic-facing.

Belongs to the cation diffusion facilitator (CDF) transporter (TC 2.A.4) family. SLC30A subfamily.

It is found in the membrane. In terms of biological role, involved in sequestration of excess zinc in the cytoplasm into vacuoles to maintain zinc homeostasis. The sequence is that of Metal tolerance protein A2 (MTPA2) from Arabidopsis thaliana (Mouse-ear cress).